A 67-amino-acid chain; its full sequence is Large ribosomal subunit protein uL30 (67 aa).

This sequence belongs to the universal ribosomal protein uL30 family. In terms of assembly, part of the 50S ribosomal subunit.

The protein is Large ribosomal subunit protein uL30 of Sorangium cellulosum (strain So ce56) (Polyangium cellulosum (strain So ce56)).